The primary structure comprises 150 residues: Large ribosomal subunit protein uL13 (150 aa).

Residues 130–150 form a disordered region; that stretch reads EHPHSAQNPQVLSITTNELVK. Residues 134–150 show a composition bias toward polar residues; the sequence is SAQNPQVLSITTNELVK.

This sequence belongs to the universal ribosomal protein uL13 family. Part of the 50S ribosomal subunit.

Functionally, this protein is one of the early assembly proteins of the 50S ribosomal subunit, although it is not seen to bind rRNA by itself. It is important during the early stages of 50S assembly. In Prochlorococcus marinus (strain SARG / CCMP1375 / SS120), this protein is Large ribosomal subunit protein uL13.